The following is a 306-amino-acid chain: Isoaspartyl peptidase/L-asparaginase (306 aa).

The Nucleophile role is filled by threonine 174. Residues 202-205 (RIGD) and 224-227 (TGKG) contribute to the substrate site.

This sequence belongs to the Ntn-hydrolase family. In terms of assembly, heterotetramer of two alpha and two beta chains arranged as a dimer of alpha/beta heterodimers. Post-translationally, cleaved into an alpha and beta chain by autocatalysis; this activates the enzyme. The N-terminal residue of the beta subunit is responsible for the nucleophile hydrolase activity. In terms of tissue distribution, developing seeds.

It catalyses the reaction Cleavage of a beta-linked Asp residue from the N-terminus of a polypeptide.. Functionally, degrades proteins damaged by L-isoaspartyl residue formation (also known as beta-Asp residues). Also has L-asparaginase activity, which is used to liberate stored nitrogen during seed development. The protein is Isoaspartyl peptidase/L-asparaginase of Lupinus arboreus (Tree lupine).